Consider the following 277-residue polypeptide: Ribosomal protein L11 methyltransferase (277 aa).

4 residues coordinate S-adenosyl-L-methionine: threonine 130, glycine 151, aspartate 172, and asparagine 213.

Belongs to the methyltransferase superfamily. PrmA family.

The protein localises to the cytoplasm. It carries out the reaction L-lysyl-[protein] + 3 S-adenosyl-L-methionine = N(6),N(6),N(6)-trimethyl-L-lysyl-[protein] + 3 S-adenosyl-L-homocysteine + 3 H(+). In terms of biological role, methylates ribosomal protein L11. This Campylobacter concisus (strain 13826) protein is Ribosomal protein L11 methyltransferase.